Reading from the N-terminus, the 1555-residue chain is Bromodomain adjacent to zinc finger domain protein 1A (1555 aa).

Positions 1–128 are required for association with the CHRAC1/POLE3 complex; it reads MPLLHRKPFV…EETVEVIRNN (128 aa). Positions 1 to 128 are required for interaction with the CHRAC1-POLE3 heterodimer. Required for interaction with the CHRAC1-POLE3 heterodimer; that stretch reads MPLLHRKPFV…EETVEVIRNN (128 aa). Residues 1–133 form a required for interaction with NCOR1 region; it reads MPLLHRKPFV…VIRNNGTRLQ (133 aa). Residues 22–128 enclose the WAC domain; sequence EEVFYCKVTN…EETVEVIRNN (107 aa). A phosphoserine mark is found at serine 270 and serine 284. The DDT domain maps to 422–488; the sequence is PEVFGDALMV…LTAIFQAMAE (67 aa). Residues 635-701 are a coiled coil; the sequence is IEDYVDVLRQ…EDEQRNSAAV (67 aa). 2 stretches are compositionally biased toward basic and acidic residues: residues 652-664 and 671-696; these read LKAE…REAT and RKEE…DEQR. A disordered region spans residues 652 to 751; it reads LKAEQHRKER…KRSRRGKVGQ (100 aa). The segment at 668–935 is interaction with SMARCA5; it reads IRRRKEEKLK…QEKSRICAQL (268 aa). The interval 668 to 935 is required for interaction with SMARCA5 and formation of the CHRAC ISWI chromatin remodeling complex; that stretch reads IRRRKEEKLK…QEKSRICAQL (268 aa). Acidic residues-rich tracts occupy residues 705 to 714 and 728 to 737; these read GEEEREDFDT and PDVVTEDEDD. A Phosphothreonine modification is found at threonine 732. Residues 773–798 are a coiled coil; it reads SADAEEALRQEQQQKEKELLDKIQSA. Disordered regions lie at residues 843-874 and 944-969; these read PSSF…SSLD and HFSD…CDIS. A compositionally biased stretch (low complexity) spans 864–873; sequence SFLSESTSSL. A Glycyl lysine isopeptide (Lys-Gly) (interchain with G-Cter in SUMO2) cross-link involves residue lysine 954. Serine 962 and serine 963 each carry phosphoserine. A PHD-type zinc finger spans residues 1149–1199; the sequence is NARCKICRKKGDAENMVLCDGCDRGHHTYCVRPKLKAVPDGDWFCPECRPK. The segment at 1203 to 1429 is disordered; it reads RRLSSRQRPS…LNRRSSGRQG (227 aa). Acidic residues predominate over residues 1214 to 1258; that stretch reads ESDEEMEEGMEDDDDEVDDDDEEGQSEEEEYEVEQDEEDSDDDEA. Over residues 1263 to 1277 the composition is skewed to basic residues; that stretch reads KRGRPQVRLPIKTKG. At serine 1282 the chain carries Phosphoserine. Polar residues predominate over residues 1297–1313; sequence SRSQQSTPKNTAKSASK. Serine 1320, serine 1339, serine 1352, serine 1370, serine 1401, serine 1412, and serine 1416 each carry phosphoserine. Over residues 1369–1386 the composition is skewed to polar residues; the sequence is HSPSFTNFRVSTSRSSRQ. The Bromo domain maps to 1429–1532; the sequence is GGVHELSAFE…AFFHIQAQKL (104 aa). Position 1546 is a phosphothreonine (threonine 1546).

The protein belongs to the WAL family. Component of the ACF-1 ISWI chromatin remodeling complex at least composed of SMARCA1 and BAZ1A, which regulates the spacing of histone octamers on the DNA template to facilitate access to DNA. Within the ACF-1 ISWI chromatin remodeling complex interacts with SMARCA1; the interaction is direct. Component of the ACF-5 ISWI chromatin remodeling complex (also called the ACF complex) at least composed of BAZ1A and SMARCA5/SNF2H, which regulates the spacing of histone octamers on the DNA template to facilitate access to DNA. Within the ACF-5 ISWI chromatin remodeling complex interacts with SMARCA5/SNF2H; the interaction is direct. Component of the CHRAC ISWI chromatin remodeling complex at least composed of SMARCA5/SNF2H, BAZ1A/ACF1, CHRAC1 and POLE3; the complex preferentially binds DNA through the CHRAC1-POLE3 heterodimer and possesses ATP-dependent nucleosome-remodeling activity. Within the complex interacts (via N-terminus) with POLE3-CHRAC1 heterodimer; the interaction is direct and is required for the complex to preferentially bind to DNA. Within the complex interacts with SMARCA5/SNF2H; the interaction is direct and promotes the interaction with the POLE3-CHRAC1 heterodimer. Interacts with NCOR1 (via its RD1 domain); the interaction corepresses a number of NCOR1-regulated genes.

It localises to the nucleus. In terms of biological role, regulatory subunit of the ATP-dependent ACF-1 and ACF-5 ISWI chromatin remodeling complexes, which form ordered nucleosome arrays on chromatin and slide edge- and center-positioned histone octamers away from their original location on the DNA template to facilitate access to DNA during DNA-templated processes such as DNA replication, transcription, and repair. Both complexes regulate the spacing of nucleosomes along the chromatin and have the ability to slide mononucleosomes to the center of a DNA template in an ATP-dependent manner. The ACF-1 ISWI chromatin remodeling complex has a lower ATP hydrolysis rate than the ACF-5 ISWI chromatin remodeling complex. Has a role in sensing the length of DNA which flank nucleosomes, which modulates the nucleosome spacing activity of the ACF-5 ISWI chromatin remodeling complex. Involved in DNA replication and together with SMARCA5/SNF2H is required for replication of pericentric heterochromatin in S-phase. May have a role in nuclear receptor-mediated transcription repression. This Mus musculus (Mouse) protein is Bromodomain adjacent to zinc finger domain protein 1A (Baz1a).